Reading from the N-terminus, the 276-residue chain is Formamidopyrimidine-DNA glycosylase (276 aa).

Catalysis depends on Pro2, which acts as the Schiff-base intermediate with DNA. Residue Glu3 is the Proton donor of the active site. The Proton donor; for beta-elimination activity role is filled by Lys59. His92, Arg111, and Lys155 together coordinate DNA. The FPG-type zinc finger occupies 239–273; sequence AVYGQTGAPCPRCGTAIEKIKVGGRGTHFCPTCQQ. Arg263 (proton donor; for delta-elimination activity) is an active-site residue.

The protein belongs to the FPG family. Monomer. Zn(2+) serves as cofactor.

It catalyses the reaction Hydrolysis of DNA containing ring-opened 7-methylguanine residues, releasing 2,6-diamino-4-hydroxy-5-(N-methyl)formamidopyrimidine.. It carries out the reaction 2'-deoxyribonucleotide-(2'-deoxyribose 5'-phosphate)-2'-deoxyribonucleotide-DNA = a 3'-end 2'-deoxyribonucleotide-(2,3-dehydro-2,3-deoxyribose 5'-phosphate)-DNA + a 5'-end 5'-phospho-2'-deoxyribonucleoside-DNA + H(+). Involved in base excision repair of DNA damaged by oxidation or by mutagenic agents. Acts as a DNA glycosylase that recognizes and removes damaged bases. Has a preference for oxidized purines, such as 7,8-dihydro-8-oxoguanine (8-oxoG). Has AP (apurinic/apyrimidinic) lyase activity and introduces nicks in the DNA strand. Cleaves the DNA backbone by beta-delta elimination to generate a single-strand break at the site of the removed base with both 3'- and 5'-phosphates. This chain is Formamidopyrimidine-DNA glycosylase, found in Exiguobacterium sibiricum (strain DSM 17290 / CCUG 55495 / CIP 109462 / JCM 13490 / 255-15).